Reading from the N-terminus, the 712-residue chain is MTEKTIKDWEALAEKELRVSPEGLVWHTPEGIDVKPLYTSDDMSGIGHLNSLPGFEPFVRGPRATMYAGRPWTVRQYAGFSTAEASNAFYRRNLAAGQQGVSVAFDLATHRGYDSDHPRVQGDVGKAGVAIDSVEDMKILFDGIPLDRISVSMTMNGAVIPILASFIVAGEEQGVSRDKLSGTIQNDILKEFMVRNTYIYPPEPSMRIVADIIEYTAKEMPKFNSISISGYHMQEAGATLVQELAFTLADGREYVRAALAKGLNVDDFAGRLSFFFAIGMNFFMEAAKLRAARLLWTRIMQEFKPEKASSLMLRTHCQTSGVSLQEQDPYNNIVRTAFEAMSAVLGGTQSLHTNSFDEAMALPTDFSARIARNTQLILQHETGVTKVVDPLAGSYYVESLTNELAEKAWGLIEEVEALGGMTKAVNAGLPKRLIEEAATRRQAAVDRAEEVIVGVNKYRLENEQPIDILQIDNAAVRTAQVKRIEETRRRRDSQKMKQALDALADVARSGKGNLLAAAVEAARARATVGEITDAMREAFGDYTAIPEVVTDIYGKAYEGDPELGVLAGRLGEATKRLGHKPKIMVAKLGQDGHDRGAKVIASAFGDIGFDVVAGPLFQTPEEAADLALAEEVTVIGVSSLAAGHRTLMPQLAEALKKRGGEDIIVVCGGVIPRQDYDYLMENGVAAVFGPGTQVLDAARAVLDLIEGKRRNV.

Residues 73–77 (TVRQY), 183–185 (TIQ), R195, K222, H232, and 271–273 (RLS) each bind substrate. Residues 580–712 (KPKIMVAKLG…DLIEGKRRNV (133 aa)) enclose the B12-binding domain. Residue H593 participates in adenosylcob(III)alamin binding.

This sequence belongs to the methylmalonyl-CoA mutase family. As to quaternary structure, homodimer. Adenosylcob(III)alamin serves as cofactor. Requires a monovalent cation as cofactor.

The catalysed reaction is (R)-methylmalonyl-CoA = succinyl-CoA. Its pathway is metabolic intermediate metabolism; propanoyl-CoA degradation; succinyl-CoA from propanoyl-CoA: step 3/3. In terms of biological role, radical enzyme that catalyzes the transformation of methylmalonyl-CoA to succinyl-CoA. Is required for growth on the polyhydroxyalkanoate degradation pathway intermediates 3-hydroxybutyrate and acetoacetate as sole carbon source. The sequence is that of Methylmalonyl-CoA mutase from Rhizobium meliloti (strain 1021) (Ensifer meliloti).